The sequence spans 289 residues: ATP synthase gamma chain (289 aa).

It belongs to the ATPase gamma chain family. In terms of assembly, F-type ATPases have 2 components, CF(1) - the catalytic core - and CF(0) - the membrane proton channel. CF(1) has five subunits: alpha(3), beta(3), gamma(1), delta(1), epsilon(1). CF(0) has three main subunits: a, b and c.

Its subcellular location is the cell inner membrane. Functionally, produces ATP from ADP in the presence of a proton gradient across the membrane. The gamma chain is believed to be important in regulating ATPase activity and the flow of protons through the CF(0) complex. In Haemophilus influenzae (strain 86-028NP), this protein is ATP synthase gamma chain.